Consider the following 224-residue polypeptide: 7-cyano-7-deazaguanine synthase (224 aa).

11-21 serves as a coordination point for ATP; sequence FSGGQDSTTCL. The Zn(2+) site is built by cysteine 190, cysteine 199, cysteine 202, and cysteine 205.

The protein belongs to the QueC family. Requires Zn(2+) as cofactor.

The enzyme catalyses 7-carboxy-7-deazaguanine + NH4(+) + ATP = 7-cyano-7-deazaguanine + ADP + phosphate + H2O + H(+). The protein operates within purine metabolism; 7-cyano-7-deazaguanine biosynthesis. In terms of biological role, catalyzes the ATP-dependent conversion of 7-carboxy-7-deazaguanine (CDG) to 7-cyano-7-deazaguanine (preQ(0)). The protein is 7-cyano-7-deazaguanine synthase of Parabacteroides distasonis (strain ATCC 8503 / DSM 20701 / CIP 104284 / JCM 5825 / NCTC 11152).